The chain runs to 548 residues: uncharacterized protein (548 aa).

Phosphoserine occurs at positions 19 and 25. Thr-47 carries the post-translational modification Phosphothreonine.

This is an uncharacterized protein from Schizosaccharomyces pombe (strain 972 / ATCC 24843) (Fission yeast).